We begin with the raw amino-acid sequence, 200 residues long: Probable nicotinate-nucleotide adenylyltransferase (200 aa).

This sequence belongs to the NadD family.

The enzyme catalyses nicotinate beta-D-ribonucleotide + ATP + H(+) = deamido-NAD(+) + diphosphate. Its pathway is cofactor biosynthesis; NAD(+) biosynthesis; deamido-NAD(+) from nicotinate D-ribonucleotide: step 1/1. Its function is as follows. Catalyzes the reversible adenylation of nicotinate mononucleotide (NaMN) to nicotinic acid adenine dinucleotide (NaAD). This chain is Probable nicotinate-nucleotide adenylyltransferase, found in Clavibacter michiganensis subsp. michiganensis (strain NCPPB 382).